A 131-amino-acid polypeptide reads, in one-letter code: MSGKGGKAGSAAKASQSRSAKAGLTFPVGRVHRLLRKGNYAQRIGSGAPVYMTAVLEYLAAEILELAGNAARDNKKTRIIPRHLQLAIRNDDELNKLLGNVTIAQGGVLPNIHANLLPKKSAKATKASQEL.

Ser-2 carries the post-translational modification N-acetylserine. N6-acetyllysine occurs at positions 4 and 7. Gln-105 carries the post-translational modification N5-methylglutamine. Residue Lys-126 forms a Glycyl lysine isopeptide (Lys-Gly) (interchain with G-Cter in SUMO) linkage. Ser-128 carries the post-translational modification Phosphoserine. Residues 128–129 (SQ) carry the [ST]-Q motif motif.

The protein belongs to the histone H2A family. In terms of assembly, the nucleosome is a histone octamer containing two molecules each of H2A, H2B, H3 and H4 assembled in one H3-H4 heterotetramer and two H2A-H2B heterodimers. The octamer wraps approximately 147 bp of DNA. Phosphorylated to form H2AS128ph (gamma-H2A) in response to DNA double-strand breaks (DSBs) generated by exogenous genotoxic agents and by stalled replication forks. Phosphorylation is dependent on the DNA damage checkpoint kinases MEC1/ATR and TEL1/ATM, spreads on either side of a detected DSB site and may mark the surrounding chromatin for recruitment of proteins required for DNA damage signaling and repair. Gamma-H2A is removed from the DNA prior to the strand invasion-primer extension step of the repair process and subsequently dephosphorylated by PPH3, a component of the histone H2A phosphatase complex (HTP-C). Dephosphorylation is necessary for efficient recovery from the DNA damage checkpoint. In terms of processing, sumoylation on Lys-126 may lead to transcriptional repression. Post-translationally, acetylated by ESA1 to form H2AK4ac and H2AK7ac.

The protein resides in the nucleus. The protein localises to the chromosome. In terms of biological role, core component of nucleosome which plays a central role in DNA double strand break (DSB) repair. Nucleosomes wrap and compact DNA into chromatin, limiting DNA accessibility to the cellular machineries which require DNA as a template. Histones thereby play a central role in transcription regulation, DNA repair, DNA replication and chromosomal stability. DNA accessibility is regulated via a complex set of post-translational modifications of histones, also called histone code, and nucleosome remodeling. The chain is Histone H2A.1 (HTA1) from Eremothecium gossypii (strain ATCC 10895 / CBS 109.51 / FGSC 9923 / NRRL Y-1056) (Yeast).